The primary structure comprises 119 residues: Large ribosomal subunit protein bL20 (119 aa).

It belongs to the bacterial ribosomal protein bL20 family.

In terms of biological role, binds directly to 23S ribosomal RNA and is necessary for the in vitro assembly process of the 50S ribosomal subunit. It is not involved in the protein synthesizing functions of that subunit. The chain is Large ribosomal subunit protein bL20 from Polaromonas sp. (strain JS666 / ATCC BAA-500).